We begin with the raw amino-acid sequence, 445 residues long: Glutamate-1-semialdehyde 2,1-aminomutase (445 aa).

Lysine 263 carries the N6-(pyridoxal phosphate)lysine modification.

This sequence belongs to the class-III pyridoxal-phosphate-dependent aminotransferase family. HemL subfamily. Pyridoxal 5'-phosphate is required as a cofactor.

Its subcellular location is the cytoplasm. It carries out the reaction (S)-4-amino-5-oxopentanoate = 5-aminolevulinate. It participates in porphyrin-containing compound metabolism; protoporphyrin-IX biosynthesis; 5-aminolevulinate from L-glutamyl-tRNA(Glu): step 2/2. The protein is Glutamate-1-semialdehyde 2,1-aminomutase of Haloarcula marismortui (strain ATCC 43049 / DSM 3752 / JCM 8966 / VKM B-1809) (Halobacterium marismortui).